We begin with the raw amino-acid sequence, 476 residues long: Ribosomal protein uS12 methylthiotransferase RimO (476 aa).

Residues 33 to 143 enclose the MTTase N-terminal domain; the sequence is NRIGFVSLGC…VLKHVHKYVP (111 aa). [4Fe-4S] cluster is bound by residues C42, C78, C107, C175, C179, and C182. The Radical SAM core domain occupies 161 to 398; it reads LTPKHYAYLK…MEVQAEISAE (238 aa). In terms of domain architecture, TRAM spans 401 to 467; sequence ARFVGRTMDI…EHDLWAELVD (67 aa).

It belongs to the methylthiotransferase family. RimO subfamily. [4Fe-4S] cluster is required as a cofactor.

The protein resides in the cytoplasm. It carries out the reaction L-aspartate(89)-[ribosomal protein uS12]-hydrogen + (sulfur carrier)-SH + AH2 + 2 S-adenosyl-L-methionine = 3-methylsulfanyl-L-aspartate(89)-[ribosomal protein uS12]-hydrogen + (sulfur carrier)-H + 5'-deoxyadenosine + L-methionine + A + S-adenosyl-L-homocysteine + 2 H(+). Its function is as follows. Catalyzes the methylthiolation of an aspartic acid residue of ribosomal protein uS12. This Shewanella sp. (strain MR-4) protein is Ribosomal protein uS12 methylthiotransferase RimO.